Here is a 71-residue protein sequence, read N- to C-terminus: MRTLCSLLLICCLLFSYTTPAVGSLKSIGYEAELDHCHTNGGYCVRAICPPSARRPGSCFPEKNPCCKYMK.

The signal sequence occupies residues 1–20 (MRTLCSLLLICCLLFSYTTP). 3 disulfide bridges follow: cysteine 37/cysteine 66, cysteine 44/cysteine 59, and cysteine 49/cysteine 67.

It belongs to the beta-defensin family. Kidney, uterus and to a lesser extent in heart.

The protein localises to the secreted. Functionally, has bactericidal activity. This chain is Beta-defensin 2 (Defb2), found in Mus musculus (Mouse).